Here is a 300-residue protein sequence, read N- to C-terminus: NAD kinase (300 aa).

The Proton acceptor role is filled by Asp75. Residues 75–76 (DG), 149–150 (ND), Arg177, Asp179, 190–195 (TAYALS), Ala214, and Gln248 each bind NAD(+).

Belongs to the NAD kinase family. A divalent metal cation serves as cofactor.

It is found in the cytoplasm. It carries out the reaction NAD(+) + ATP = ADP + NADP(+) + H(+). Functionally, involved in the regulation of the intracellular balance of NAD and NADP, and is a key enzyme in the biosynthesis of NADP. Catalyzes specifically the phosphorylation on 2'-hydroxyl of the adenosine moiety of NAD to yield NADP. This is NAD kinase from Paraburkholderia phytofirmans (strain DSM 17436 / LMG 22146 / PsJN) (Burkholderia phytofirmans).